The primary structure comprises 332 residues: 5-dehydro-2-deoxygluconokinase (332 aa).

It belongs to the carbohydrate kinase PfkB family.

It catalyses the reaction 5-dehydro-2-deoxy-D-gluconate + ATP = 6-phospho-5-dehydro-2-deoxy-D-gluconate + ADP + H(+). It functions in the pathway polyol metabolism; myo-inositol degradation into acetyl-CoA; acetyl-CoA from myo-inositol: step 5/7. Catalyzes the phosphorylation of 5-dehydro-2-deoxy-D-gluconate (2-deoxy-5-keto-D-gluconate or DKG) to 6-phospho-5-dehydro-2-deoxy-D-gluconate (DKGP). This Bacillus thuringiensis (strain Al Hakam) protein is 5-dehydro-2-deoxygluconokinase.